The chain runs to 388 residues: Protochlorophyllide reductase A, chloroplastic (388 aa).

The transit peptide at 1-74 (MALQLLPSTL…KPSGKKTLRQ (74 aa)) directs the protein to the chloroplast.

This sequence belongs to the short-chain dehydrogenases/reductases (SDR) family. POR subfamily.

It localises to the plastid. Its subcellular location is the chloroplast. The catalysed reaction is chlorophyllide a + NADP(+) = protochlorophyllide a + NADPH + H(+). It functions in the pathway porphyrin-containing compound metabolism; chlorophyll biosynthesis. Phototransformation of protochlorophyllide (Pchlide) to chlorophyllide (Chlide). In Triticum aestivum (Wheat), this protein is Protochlorophyllide reductase A, chloroplastic (PORA).